We begin with the raw amino-acid sequence, 163 residues long: Keratin-associated protein 11-1 (163 aa).

Tandem repeats lie at residues 111 to 120, 121 to 130, 131 to 140, and 141 to 150. The interval 111–150 is 4 X 10 AA approximate repeats; sequence CQPLGGISSVCQPVGGISTVCQPVGGVSTVCQPACGVSRT.

It belongs to the PMG family. Expressed in the upper matrix and in the entire hair cortex.

Functionally, in the hair cortex, hair keratin intermediate filaments are embedded in an interfilamentous matrix, consisting of hair keratin-associated proteins (KRTAP), which are essential for the formation of a rigid and resistant hair shaft through their extensive disulfide bond cross-linking with abundant cysteine residues of hair keratins. The matrix proteins include the high-sulfur and high-glycine-tyrosine keratins. The sequence is that of Keratin-associated protein 11-1 (KRTAP11-1) from Homo sapiens (Human).